Reading from the N-terminus, the 187-residue chain is Elongation factor P (187 aa).

The protein belongs to the elongation factor P family.

It is found in the cytoplasm. It participates in protein biosynthesis; polypeptide chain elongation. In terms of biological role, involved in peptide bond synthesis. Stimulates efficient translation and peptide-bond synthesis on native or reconstituted 70S ribosomes in vitro. Probably functions indirectly by altering the affinity of the ribosome for aminoacyl-tRNA, thus increasing their reactivity as acceptors for peptidyl transferase. This is Elongation factor P from Frankia casuarinae (strain DSM 45818 / CECT 9043 / HFP020203 / CcI3).